Reading from the N-terminus, the 1031-residue chain is NACHT, LRR and PYD domains-containing protein 3 (1031 aa).

The region spanning 1–93 is the Pyrin domain; the sequence is MRMVSVRCKL…YEKAKREEPE (93 aa). At S5 the chain carries Phosphoserine. Phosphotyrosine is present on Y13. C125 is lipidated: S-palmitoyl cysteine. The required for binding to phosphatidylinositol 4-phosphate (PtdIns4P) stretch occupies residues 126 to 129; that stretch reads RKKK. 3 positions are modified to phosphotyrosine: Y131, Y135, and Y138. One can recognise an FISNA domain in the interval 135 to 207; it reads YRKYVRSKFQ…SSVNLELLFD (73 aa). The residue at position 156 (S156) is a Phosphoserine. T164 contributes to the ATP binding site. A phosphoserine mark is found at S195 and S198. An NACHT domain is found at 217 to 533; it reads HTVVFQGAAG…EFFAAMYYLL (317 aa). 223-230 contributes to the ATP binding site; that stretch reads GAAGIGKT. Residues S262 and S292 each carry the phosphoserine modification. K321 participates in a covalent cross-link: Glycyl lysine isopeptide (Lys-Gly) (interchain with G-Cter in ubiquitin). S331 carries the post-translational modification Phosphoserine. Positions 352 to 356 match the KFERQ-like motif 1 motif; the sequence is LEKLQ. K427 is covalently cross-linked (Glycyl lysine isopeptide (Lys-Gly) (interchain with G-Cter in ubiquitin)). H519 is a binding site for ATP. The KFERQ-like motif 2 motif lies at 601-605; the sequence is KIRLE. A Glycyl lysine isopeptide (Lys-Gly) (interchain with G-Cter in ubiquitin) cross-link involves residue K687. S723 and S730 each carry phosphoserine. LRR repeat units follow at residues 737–757, 766–787, 794–814, 823–844, and 851–871; these read NLTE…NVLC, NIRR…NISS, KLVE…RLLC, NLKK…DLAS, and SLTR…GILC. The KFERQ-like motif 3 signature appears at 793–797; sequence QKLVE. At S801 the chain carries Phosphoserine. S-palmitoyl cysteine attachment occurs at residues C832, C833, and C839. Y856 bears the Phosphotyrosine mark. Residue K873 forms a Glycyl lysine isopeptide (Lys-Gly) (interchain with G-Cter in ubiquitin) linkage. LRR repeat units follow at residues 880–901, 908–929, 937–958, and 965–986; these read NLQK…ALSS, NLTH…LLCE, KLQV…DLST, and SLRK…LLCE. C953 carries S-palmitoyl cysteine lipidation. K968 is covalently cross-linked (Glycyl lysine isopeptide (Lys-Gly) (interchain with G-Cter in ubiquitin)). The KFERQ-like motif 4 signature appears at 986–990; the sequence is EVLKQ. A Phosphoserine modification is found at S1030.

The protein belongs to the NLRP family. As to quaternary structure, sensor component of NLRP3 inflammasomes; inflammasomes are supramolecular complexes that assemble in the cytosol in response to pathogens and other damage-associated signals and play critical roles in innate immunity and inflammation. The core of NLRP3 inflammasomes consists of a signal sensor component (NLRP3), an adapter (PYCARD/ASC), which recruits an effector pro-inflammatory caspase (CASP1 and, possibly, CASP4 and CASP5). Homodecamer; inactive NLRP3 forms homodecameric double-ring cages that hide pyrin domains within NACHT-LRR rings to avoid premature activation. Interacts (via pyrin domain) with PYCARD/ASC (via pyrin domain); interaction is direct. Interacts (via LRR repeat domain) with NEK7 (via N-terminus); the interaction is required for the formation of the complex NLRP3:PYCARD, oligomerization of PYCARD/ASC and activation of CASP1. Interacts (via LRR repeat domain) with NR4A1/Nur77 (via N-terminus); the interaction is direct, requires activation of NR4A1 by its ligands NBRE-containing dsDNA and lipopolysaccharide, and stimulates the association of NLRP3 with NEK7 for non-canonical NLRP3 inflammasome activation. Interacts with CARD8; leading to inhibit formation of the NLRP3 inflammasome. Interacts with MEFV; this interaction targets NLRP3 to degradation by autophagy, hence preventing excessive IL1B- and IL18-mediated inflammation. Interacts with EIF2AK2/PKR; this interaction requires EIF2AK2 activity, is accompanied by EIF2AK2 autophosphorylation and promotes inflammasome assembly in response to specific stimuli. Interacts with GBP5 (via DAPIN domain); this interaction promotes inflammasome assembly in response to microbial and soluble, but not crystalline, agents. Interacts with PML (isoform PML-1) (via the leucine-rich repeat (LRR) domain); PML-mediated increase in NLRP3 inflammasome activation does not depend upon this interaction. Interacts (via NACHT domain) with DHX33 (via DEAH box); NLRP3 activation in presence of cytosolic dsRNA is mediated by DHX33. Interacts (via NACHT and LRR domains) with ARRB2; this interaction is direct and inducible by polyunsaturated fatty acids (PUFAs). Interacts (via NACHT domain) with DDX3X under both LPS-primed and inflammasome-activating conditions. Interacts with IRF4 (via the LRR domain); this interaction is direct and is required for optimal IRF4 binding to IL4 promoter and efficient IL4 transactivation during differentiation of Th2 helper T-cells. Interacts with MAVS; promoting localization to mitochondria and activation of the NLRP3 inflammasome. Interacts with MARK4; promoting localization of NLRP3 to the microtubule organizing center (MTOC). Interacts with TRIM50; this interaction also promotes NLRP3 oligomerization and subsequent inflammasome activation. Interacts with IRGM; preventing NLRP3 inflammasome assembly and promoting NLRP3 degradation. Interacts (via KFERQ-like motifs) with HSPA8/HSC70; promoting NLRP3 degradation by the chaperone-mediated autophagy pathway. Interacts (via NACHT and LLR domains) with ABHD8; this interaction is enhanced in the presence of NLRP3 inflammasome inducers, such as ATP, nigericin, silica, or alum. Interaction with ABHD8 leads the recruitment of ZDHHC12, hence facilitating NLRP3 palmitoylation and degradation by the chaperone-mediated autophagy pathway (CMA), therefore attenuating NLRP3 inflammasome activation. Phosphorylation at Ser-198 by MAPK8/JNK1 increases inflammasome activation by promoting deubiquitination by BRCC3 and NLRP3 homooligomerization. Phosphorylation at Ser-801 by CSNK1A1 prevents inflammasome activation by preventing NEK7 recruitment. Phosphorylation at Ser-5 in the pyrin domain inhibits homomultimerization of NLRP3 and activation of the NLRP3 inflammasome: dephosphorylation by protein phosphatase 2A (PP2A) promotes assembly of the NLRP3 inflammasome. Phosphorylation at Ser-292 by PKD/PRKD1 promotes NLRP3 inflammasome assembly. Phosphorylation by ERK1/MAPK3 promotes NLRP3 inflammasome assembly. Phosphorylation by BTK (at Tyr-131, Tyr-135 and Tyr-138) in the region that mediates binding to phosphatidylinositol phosphate, promotes relocalization of NLRP3 and assembly of the NLRP3 inflammasome. Phosphorylation at Tyr-856 inhibits NLRP3 inflammasome assembly: dephosphorylation by PTPN22 promotes inflammasome activation. Phosphorylated by LATS1 and LATS2 at Ser-262 following palmitoylation by ZDHHC1, promoting its relocalization to the microtubule organizing center (MTOC), where NLRP3 is activated by NEK7, leading to inflammasome assembly and activation. Post-translationally, ubiquitinated; undergoes both 'Lys-48'- and 'Lys-63'-linked polyubiquitination. Ubiquitination does not lead to degradation, but inhibits inflammasome activation. Deubiquitination is catalyzed by BRCC3 and associated with NLRP3 activation and inflammasome assembly. This process can be induced by the activation of Toll-like receptors (by LPS), through a non-transcriptional pathway dependent on the mitochondrial production of reactive oxygen species, and by ATP. Ubiquitinated by TRIM31 via 'Lys-48'-linked ubiquitination, leading to its degradation by the proteasome. Ubiquitinated at Lys-687 by the SCF(FBXL2) complex, leading to its degradation by the proteasome. Ubiquitinated by TRIM35 via 'lys-48' and 'Lys-63'-linked ubiquitination leading to inhibition of NLRP3 inflammasome activation. Undergoes 'Lys-27'-linked polyubiquitination by MARCHF5, leading to NLRP3-NEK7 complex formation and NLRP3 oligomerization. In terms of processing, palmitoylation by ZDHHC12 promotes NLRP3 degradation by the chaperone-mediated autophagy pathway (CMA) and therefore limits NLRP3 inflammasome activation. Interaction with ZDHHC12, and hence NLRP3 palmitoylation, is greatly enhanced by ABHD8. Following palmitoylation, HSPA8/HSC70 recognizes and binds the KFERQ-like motifs on NLRP3 and promotes NLRP3 recruitment to lysosomes, where it is degraded via the chaperone-mediated autophagy pathway in a LAMP2-dependent process. Palmitoylation at Cys-832 and Cys-833 by ZDHHC5 enhances its binding to NEK7 leading to inflammasome assembly and activation. Palmitoylation at Cys-125 and Cys-953 by ZDHHC1 facilitates phosphorylation at Ser-262 by LATS1 and LATS2, promoting its relocalization to the microtubule organizing center (MTOC), where NLRP3 is activated by NEK7, leading to inflammasome assembly and activation. Depalmitoylated by ABHD17A. Degraded via selective autophagy following interaction with IRGM. IRGM promotes NLRP3 recruitment to autophagosome membranes, promoting its SQSTM1/p62-dependent autophagy-dependent degradation.

Its subcellular location is the cytoplasm. It localises to the cytosol. It is found in the inflammasome. The protein resides in the cytoskeleton. The protein localises to the microtubule organizing center. Its subcellular location is the golgi apparatus membrane. It localises to the endoplasmic reticulum. It is found in the mitochondrion. The protein resides in the secreted. The protein localises to the nucleus. The catalysed reaction is ATP + H2O = ADP + phosphate + H(+). Its activity is regulated as follows. Under resting conditions, NLRP3 binds ADP and is autoinhibited. Inactive NLRP3 forms homodecameric double-ring cages that hide pyrin domains within NACHT-LRR rings to avoid premature activation. NLRP3 activation stimuli include extracellular ATP, nigericin, reactive oxygen species, crystals of monosodium urate or cholesterol, amyloid-beta fibers, environmental or industrial particles and nanoparticles, such as asbestos, silica, aluminum salts, cytosolic dsRNA, etc. Almost all stimuli trigger intracellular K(+) efflux. These stimuli lead to membrane perturbations that induce activation of NLRP3. Upon activation, NLRP3 is transported to microtubule organizing center (MTOC), where it is unlocked by NEK7, leading to its relocalization to dispersed trans-Golgi network (dTGN) vesicle membranes and recruitment of PYCARD/ASC for the formation of an active inflammasome complex. NEK7-activated NLRP3 forms a disk-shaped inflammasome. NLRP3 and PYCARD/ASC interact via their respective pyrin domains; interaction initiates speck formation (nucleation) which greatly enhances further addition of soluble PYCARD/ASC molecules to the speck in a prion-like polymerization process. Clustered PYCARD/ASC nucleates the formation of CASP1 filaments through the interaction of their respective CARD domains, acting as a platform for CASP1 polymerization and activation. Active CASP1 then processes IL1B and IL18 precursors, leading to the release of mature cytokines in the extracellular milieu and inflammatory response. NLRP3 inflammasome assembly is inhibited by IRGM, which impedes NLRP3 oligomerization. NLRP3 inflammasome is inhibited by cyclic AMP (cAMP), which directly binds NLRP3; inhibition is relieved by calcium-sensing receptor CASR, which inhibits production of cAMP. Specifically inhibited by sulfonylurea MCC950 (also named CP-456,773, CRID3), a potent and specific small-molecule inhibitor of the NLRP3 inflammasome that acts by preventing ATP hydrolysis. Sensor component of the NLRP3 inflammasome, which mediates inflammasome activation in response to defects in membrane integrity, leading to secretion of inflammatory cytokines IL1B and IL18 and pyroptosis. In response to pathogens and other damage-associated signals that affect the integrity of membranes, initiates the formation of the inflammasome polymeric complex composed of NLRP3, CASP1 and PYCARD/ASC. Recruitment of pro-caspase-1 (proCASP1) to the NLRP3 inflammasome promotes caspase-1 (CASP1) activation, which subsequently cleaves and activates inflammatory cytokines IL1B and IL18 and gasdermin-D (GSDMD), promoting cytokine secretion and pyroptosis. Activation of NLRP3 inflammasome is also required for HMGB1 secretion; stimulating inflammatory responses. Under resting conditions, ADP-bound NLRP3 is autoinhibited. NLRP3 activation stimuli include extracellular ATP, nigericin, reactive oxygen species, crystals of monosodium urate or cholesterol, amyloid-beta fibers, environmental or industrial particles and nanoparticles, such as asbestos, silica, aluminum salts, cytosolic dsRNA, etc. Almost all stimuli trigger intracellular K(+) efflux. These stimuli lead to membrane perturbation and activation of NLRP3. Upon activation, NLRP3 is transported to microtubule organizing center (MTOC), where it is unlocked by NEK7, leading to its relocalization to dispersed trans-Golgi network (dTGN) vesicle membranes and formation of an active inflammasome complex. Associates with dTGN vesicle membranes by binding to phosphatidylinositol 4-phosphate (PtdIns4P). Shows ATPase activity. Its function is as follows. Independently of inflammasome activation, regulates the differentiation of T helper 2 (Th2) cells and has a role in Th2 cell-dependent asthma and tumor growth. During Th2 differentiation, required for optimal IRF4 binding to IL4 promoter and for IRF4-dependent IL4 transcription. Binds to the consensus DNA sequence 5'-GRRGGNRGAG-3'. May also participate in the transcription of IL5, IL13, GATA3, CCR3, CCR4 and MAF. In Bos taurus (Bovine), this protein is NACHT, LRR and PYD domains-containing protein 3 (NLRP3).